The chain runs to 213 residues: Pyridoxine/pyridoxamine 5'-phosphate oxidase (213 aa).

Residues 8–11 (RREY) and K67 each bind substrate. FMN contacts are provided by residues 62–67 (RIVLLK), 77–78 (FT), R83, K84, and Q106. Y124, R128, and S132 together coordinate substrate. Residues 141 to 142 (QS) and W186 contribute to the FMN site. Residue 192 to 194 (RLH) participates in substrate binding. FMN is bound at residue R196.

The protein belongs to the pyridoxamine 5'-phosphate oxidase family. Homodimer. FMN serves as cofactor.

The catalysed reaction is pyridoxamine 5'-phosphate + O2 + H2O = pyridoxal 5'-phosphate + H2O2 + NH4(+). It catalyses the reaction pyridoxine 5'-phosphate + O2 = pyridoxal 5'-phosphate + H2O2. It participates in cofactor metabolism; pyridoxal 5'-phosphate salvage; pyridoxal 5'-phosphate from pyridoxamine 5'-phosphate: step 1/1. It functions in the pathway cofactor metabolism; pyridoxal 5'-phosphate salvage; pyridoxal 5'-phosphate from pyridoxine 5'-phosphate: step 1/1. In terms of biological role, catalyzes the oxidation of either pyridoxine 5'-phosphate (PNP) or pyridoxamine 5'-phosphate (PMP) into pyridoxal 5'-phosphate (PLP). The polypeptide is Pyridoxine/pyridoxamine 5'-phosphate oxidase (Shewanella sediminis (strain HAW-EB3)).